A 234-amino-acid chain; its full sequence is Uridylate kinase (234 aa).

9 to 12 (KLSG) provides a ligand contact to ATP. G51 serves as a coordination point for UMP. ATP contacts are provided by G52 and R56. UMP is bound by residues D71 and 132–139 (CGNPFFTT). 3 residues coordinate ATP: T159, Y165, and D168.

The protein belongs to the UMP kinase family. In terms of assembly, homohexamer.

Its subcellular location is the cytoplasm. It catalyses the reaction UMP + ATP = UDP + ADP. It participates in pyrimidine metabolism; CTP biosynthesis via de novo pathway; UDP from UMP (UMPK route): step 1/1. With respect to regulation, inhibited by UTP. Its function is as follows. Catalyzes the reversible phosphorylation of UMP to UDP. In Prochlorococcus marinus (strain MIT 9301), this protein is Uridylate kinase.